Consider the following 2343-residue polypeptide: Pecanex-like protein 1 (2343 aa).

Transmembrane regions (helical) follow at residues 33 to 53 (ALHLYLWLFLLGLPFTLYMAL) and 57 to 77 (MIIVAVYCPVVAAVFIVLKMV). 4 disordered regions span residues 98–163 (FTDQ…GSSR), 271–290 (SHSYRKEHRPRGVPRTSSSA), 306–691 (QQQR…TRAR), and 749–826 (TRSR…QGQQ). Residues 143-163 (SSRNSYAGLDPSNQIGSGSSR) are compositionally biased toward polar residues. The span at 272–282 (HSYRKEHRPRG) shows a compositional bias: basic residues. Positions 372–390 (SLRSLSTRSSGSTESYCSG) are enriched in low complexity. Residues 396 to 412 (NSTLSSYKSEQTSSTHI) show a composition bias toward polar residues. Composition is skewed to basic and acidic residues over residues 416–457 (LSEH…DKTA), 507–521 (RPPEQSAESKEEQGE), and 530–546 (KVCKDDGGKQKEGDVRP). Over residues 556–571 (TSAHKPGRRRTGKKRA) the composition is skewed to basic residues. Composition is skewed to low complexity over residues 624 to 637 (SDSSSSATSHSCQS), 769 to 780 (AATGAAQASEEA), and 809 to 826 (TLLIGPPLSLQDGQQGQQ). 13 consecutive transmembrane segments (helical) span residues 978 to 998 (FWILPQLWIGINFDRLTLLAL), 1009 to 1029 (ILAVVLAILVAFLGSILLIQG), 1034 to 1054 (IWVFQFCLVIASCQYSLLKSV), 1068 to 1088 (IIAYSRPVYFCLCCGLIWLLD), 1118 to 1138 (LVIVFTLCFPIVFFIGLLPQV), 1162 to 1182 (LLAALYSFLCSVVAVALLYGL), 1195 to 1215 (HIPVLFSVFCGLLVAVSYHLS), 1268 to 1288 (LVVCVVIGVLYFAIHVSTVFT), 1296 to 1316 (YVLYALVGFVGLVTHYVLPQV), 1406 to 1426 (SFSSPTYQYITVIFTVLFFKF), 1434 to 1454 (TMLLDLFFMSILFSKLWELLY), 1458 to 1478 (FVYTYVAPWQITWGSAFHAFA), and 1493 to 1513 (AVVSALFSTPLNPFLGSAIFI). Residues 2050-2120 (EDSDTGGGTS…VQSSLVRQSP (71 aa)) are disordered. Composition is skewed to polar residues over residues 2060–2080 (CPANSATTASDPHNSVPQGST) and 2094–2117 (PTTSYPPTLGTSHSAHSVQSSLVR).

It belongs to the pecanex family. Specifically expressed in the germ line and not in the somatic cells of the testis, reaching its peak at the pachytene stage of the meiotic prophase. Detected in pachytene spermatocytes and round spermatids (at protein level).

It localises to the membrane. The sequence is that of Pecanex-like protein 1 from Rattus norvegicus (Rat).